The chain runs to 437 residues: GTP-binding protein ERG (437 aa).

Residues Q39–E50 show a composition bias toward polar residues. A disordered region spans residues Q39–P65. Over residues D51–S62 the composition is skewed to low complexity. Phosphoserine occurs at positions 111 and 112. The Era-type G domain occupies K152–W333. Residues G160–S167 are G1. G160–S167 is a GTP binding site. Residues N186–H190 form a G2 region. Residues D207–G210 form a G3 region. Residues D207 to L211 and N279 to D282 each bind GTP. Residues N279 to D282 form a G4 region. The interval I309–G311 is G5. The 77-residue stretch at V361–K437 folds into the KH type-2 domain.

Belongs to the TRAFAC class TrmE-Era-EngA-EngB-Septin-like GTPase superfamily. Era GTPase family.

Has a crucial role in plant growth and development, possibly by influencing mitochondrial division. The protein is GTP-binding protein ERG (ERG) of Arabidopsis thaliana (Mouse-ear cress).